The following is a 24-amino-acid chain: Aldehyde dehydrogenase gamma chain (24 aa).

As to quaternary structure, heterotrimer composed of an alpha, a beta and a gamma chain. The cofactor is [2Fe-2S] cluster.

It catalyses the reaction an aldehyde + a quinone + H2O = a quinol + a carboxylate + H(+). The polypeptide is Aldehyde dehydrogenase gamma chain (Comamonas testosteroni (Pseudomonas testosteroni)).